A 1037-amino-acid chain; its full sequence is Multidrug resistance protein MdtF (1037 aa).

The Cytoplasmic segment spans residues M1–P9. The helical transmembrane segment at V10–L30 threads the bilayer. Residues P31 to Q338 are Periplasmic-facing. A helical transmembrane segment spans residues E339–L359. Residues Q360–T369 are Cytoplasmic-facing. The helical transmembrane segment at I370–I390 threads the bilayer. The Periplasmic portion of the chain corresponds to N391–T392. Residues L393 to V413 form a helical membrane-spanning segment. The Cytoplasmic segment spans residues E414–R440. Residues A441–G461 form a helical membrane-spanning segment. Topologically, residues A462–S471 are periplasmic. The chain crosses the membrane as a helical span at residues I472–L492. At C493–R534 the chain is on the cytoplasmic side. The chain crosses the membrane as a helical span at residues C535–L555. Residues R556 to Q870 lie on the Periplasmic side of the membrane. A helical transmembrane segment spans residues A871 to E891. Position 892 (S892) is a topological domain, cytoplasmic. The chain crosses the membrane as a helical span at residues W893 to A913. Residues T914–V927 lie on the Periplasmic side of the membrane. The chain crosses the membrane as a helical span at residues G928 to V948. Topologically, residues E949–P972 are cytoplasmic. Residues I973 to A993 traverse the membrane as a helical segment. The Periplasmic portion of the chain corresponds to G994–M1006. The helical transmembrane segment at G1007–V1027 threads the bilayer. Topologically, residues E1028 to A1037 are cytoplasmic.

Belongs to the resistance-nodulation-cell division (RND) (TC 2.A.6) family. As to quaternary structure, homotrimer. Part of the tripartite efflux system MdtEF-TolC, which is composed of an inner membrane transporter, MdtF, a membrane fusion protein, MdtE, and an outer membrane component, TolC. The complex forms a large protein conduit and can translocate molecules across both the inner and outer membranes.

The protein resides in the cell inner membrane. Functionally, part of the tripartite efflux system MdtEF-TolC, which confers resistance to various compounds. The polypeptide is Multidrug resistance protein MdtF (mdtF) (Escherichia coli O6:H1 (strain CFT073 / ATCC 700928 / UPEC)).